Reading from the N-terminus, the 186-residue chain is Centromere protein M (186 aa).

It localises to the nucleus. It is found in the chromosome. Its subcellular location is the centromere. Probable component of a centromeric complex involved in assembly of kinetochore proteins, mitotic progression and chromosome segregation. The protein is Centromere protein M (cenpm) of Danio rerio (Zebrafish).